The sequence spans 1003 residues: Leucine-rich repeat receptor-like serine/threonine-protein kinase BAM1 (1003 aa).

The N-terminal stretch at 1–19 (MKLFLLLLFLLHISHTFTA) is a signal peptide. At 20-640 (SRPISEFRAL…HSKGPLSASM (621 aa)) the chain is on the extracellular side. 22 LRR repeats span residues 68-92 (RRHVTSLDLSGLNLSGTLSPDVSHL), 93-116 (RLLQNLSLAENLISGPIPPEISSL), 117-140 (SGLRHLNLSNNVFNGSFPDEISSG), 142-165 (VNLRVLDVYNNNLTGDLPVSVTNL), 166-191 (TQLRHLHLGGNYFAGKIPPSYGSWPV), 193-213 (EYLAVSGNELVGKIPPEIGNL), 215-238 (TLRELYIGYYNAFEDGLPPEIGNL), 239-262 (SELVRFDGANCGLTGEIPPEIGKL), 263-285 (QKLDTLFLQVNVFSGPLTWELGT), 286-310 (LSSLKSMDLSNNMFTGEIPASFAEL), 312-334 (NLTLLNLFRNKLHGEIPEFIGDL), 335-358 (PELEVLQLWENNFTGSIPQKLGEN), 359-382 (GKLNLVDLSSNKLTGTLPPNMCSG), 385-406 (LETLITLGNFLFGSIPDSLGKC), 407-430 (ESLTRIRMGENFLNGSIPKGLFGL), 432-454 (KLTQVELQDNYLSGELPVAGGVS), 455-480 (VNLGQISLSNNQLSGPLPPAIGNFTG), 482-502 (QKLLLDGNKFQGPIPSEVGKL), 503-526 (QQLSKIDFSHNLFSGRIAPEISRC), 527-550 (KLLTFVDLSRNELSGEIPNEITAM), 551-574 (KILNYLNLSRNHLVGSIPGSISSM), and 575-598 (QSLTSLDFSYNNLSGLVPGTGQFS). N80, N97, N123, N130, N153, and N164 each carry an N-linked (GlcNAc...) asparagine glycan. Residues N212 and N237 are each glycosylated (N-linked (GlcNAc...) asparagine). N-linked (GlcNAc...) asparagine glycans are attached at residues N312 and N346. N420 is a glycosylation site (N-linked (GlcNAc...) asparagine). A glycan (N-linked (GlcNAc...) asparagine) is linked at N477. N557, N586, and N601 each carry an N-linked (GlcNAc...) asparagine glycan. The helical transmembrane segment at 641–661 (KLLLVLGLLVCSIAFAVVAII) threads the bilayer. The Cytoplasmic segment spans residues 662–1003 (KARSLKKASE…VQSPPDLLNL (342 aa)). Residue T686 is modified to Phosphothreonine. A Protein kinase domain is found at 694 to 971 (LKEDNIIGKG…VQILTEIPKL (278 aa)). ATP contacts are provided by residues 700–708 (IGKGGAGIV) and K722. Y769 and Y807 each carry phosphotyrosine. D820 (proton acceptor) is an active-site residue. S855 bears the Phosphoserine mark. Phosphotyrosine is present on residues Y863 and Y870. A Phosphothreonine modification is found at T871. The interval 969-1003 (PKLPPSKDQPMTESAPESELSPKSGVQSPPDLLNL) is disordered. A Phosphoserine modification is found at S996.

It belongs to the protein kinase superfamily. Ser/Thr protein kinase family. In terms of assembly, self-interacts and interacts with BAM2 and CLV1. Binds to the CLV3, CLE5, CLE11, CLE18, CLE19, CLE22, CLE25, CLE26, CLE40, CLE41 and CLE42 mature peptides, probably via its extracellular leucine-rich repeat region. Expressed in seedlings, roots, leaves, inflorescences, flowers and siliques.

The protein resides in the cell membrane. The enzyme catalyses L-seryl-[protein] + ATP = O-phospho-L-seryl-[protein] + ADP + H(+). It carries out the reaction L-threonyl-[protein] + ATP = O-phospho-L-threonyl-[protein] + ADP + H(+). Its function is as follows. Necessary for male gametophyte development, as well as ovule specification and function. Involved in cell-cell communication process required during early anther development, and regulating cell division and differentiation to organize cell layers. Required for the development of high-ordered vascular strands within the leaf and a correlated control of leaf shape, size and symmetry. May regulate the CLV1-dependent CLV3-mediated signaling in meristems maintenance. The polypeptide is Leucine-rich repeat receptor-like serine/threonine-protein kinase BAM1 (BAM1) (Arabidopsis thaliana (Mouse-ear cress)).